Reading from the N-terminus, the 1063-residue chain is Error-prone DNA polymerase (1063 aa).

This sequence belongs to the DNA polymerase type-C family. DnaE2 subfamily.

It localises to the cytoplasm. The enzyme catalyses DNA(n) + a 2'-deoxyribonucleoside 5'-triphosphate = DNA(n+1) + diphosphate. Its function is as follows. DNA polymerase involved in damage-induced mutagenesis and translesion synthesis (TLS). It is not the major replicative DNA polymerase. This chain is Error-prone DNA polymerase, found in Burkholderia mallei (strain ATCC 23344).